Here is a 76-residue protein sequence, read N- to C-terminus: Putative membrane protein insertion efficiency factor (76 aa).

This sequence belongs to the UPF0161 family.

The protein localises to the cell inner membrane. Its function is as follows. Could be involved in insertion of integral membrane proteins into the membrane. This Paraburkholderia phymatum (strain DSM 17167 / CIP 108236 / LMG 21445 / STM815) (Burkholderia phymatum) protein is Putative membrane protein insertion efficiency factor.